The primary structure comprises 122 residues: uncharacterized protein (122 aa).

This is an uncharacterized protein from Carica papaya (Papaya).